The chain runs to 387 residues: Probable inactive shikimate kinase like 2, chloroplastic (387 aa).

A chloroplast-targeting transit peptide spans 1-71; it reads MAAFASGLAI…FNSFSCNCLS (71 aa). The tract at residues 368-387 is disordered; that stretch reads NIKPPGWDPSSDTGPHPQFT.

Belongs to the shikimate kinase family.

It localises to the plastid. The protein resides in the chloroplast. The sequence is that of Probable inactive shikimate kinase like 2, chloroplastic (SKL2) from Arabidopsis thaliana (Mouse-ear cress).